The chain runs to 992 residues: Vacuolar membrane protease (992 aa).

At 1–24 (MSPAMANPRVRKFNPIAFTPLPVT) the chain is on the cytoplasmic side. The helical transmembrane segment at 25–45 (FITTIVYLAVLILVLVTYLVV) threads the bilayer. Topologically, residues 46–390 (PPAPTLEMSP…SAFAVFRLHT (345 aa)) are vacuolar. Residues Asn-59, Asn-115, and Asn-118 are each glycosylated (N-linked (GlcNAc...) asparagine). The Zn(2+) site is built by His-174 and Asp-186. Catalysis depends on Glu-220, which acts as the Proton acceptor. Glu-221 is a Zn(2+) binding site. Asn-237 carries an N-linked (GlcNAc...) asparagine glycan. Zn(2+)-binding residues include Glu-246 and His-319. Residues 391–411 (LFALSVTLLVIGPLVLFITSI) traverse the membrane as a helical segment. Over 412–446 (ALSKTDRMYLFSMSKSLGGASETVSLRGLRGLFRT) the chain is Cytoplasmic. Residues 447-467 (PIILTVTTVISIGLAYLLEKI) form a helical membrane-spanning segment. The Vacuolar segment spans residues 468-474 (NPYIVHS). The helical transmembrane segment at 475-495 (SQFAVWSMMLSVWIFVAWFLA) threads the bilayer. Residues 496–508 (RVADFFRPSALHR) are Cytoplasmic-facing. The chain crosses the membrane as a helical span at residues 509 to 529 (AYSYTWIFIVTWIMLVISTVY). At 530-533 (ANQK) the chain is on the vacuolar side. The chain crosses the membrane as a helical span at residues 534 to 554 (GIAAGYFTFFYFAAVFLATWV). At 555–671 (SYLELFSLPR…WSWTLPRWTW (117 aa)) the chain is on the cytoplasmic side. A disordered region spans residues 579-620 (RSSSLSSRLLTPSADELPSDIGPNGAENVGDPDETDPTESTS). The chain crosses the membrane as a helical span at residues 672-692 (ILQLLLLAPIVIILVGQVGLL). The Vacuolar segment spans residues 693-708 (LTTAMSQIGSDGVSTF). A helical transmembrane segment spans residues 709 to 729 (IVYLACALFSTLLFAPLLPFI). The Cytoplasmic segment spans residues 730–736 (HRFTYHV). Residues 737 to 757 (PIFLLLIFIGTLIYNLVAFPF) traverse the membrane as a helical segment. Residues 758 to 992 (SPANRLKIFF…VEASHDFIIQ (235 aa)) lie on the Vacuolar side of the membrane. Residues Asn-805, Asn-846, and Asn-954 are each glycosylated (N-linked (GlcNAc...) asparagine).

Belongs to the peptidase M28 family. Zn(2+) is required as a cofactor.

Its subcellular location is the vacuole membrane. In terms of biological role, may be involved in vacuolar sorting and osmoregulation. The chain is Vacuolar membrane protease from Paracoccidioides brasiliensis (strain Pb18).